The sequence spans 494 residues: DNA-directed DNA/RNA polymerase mu (494 aa).

The segment at 1–24 (MLPKRRRARVGSPSGDAASSTPPS) is disordered. At serine 12 the chain carries Phosphoserine. The BRCT domain maps to 22–122 (PPSTRFPGVA…QPVPVECRHR (101 aa)). Residues 323–332 (RGKLQGHDVD) are involved in ssDNA binding. Residues aspartate 330, aspartate 332, and aspartate 418 each coordinate Mg(2+).

The protein belongs to the DNA polymerase type-X family. It depends on Mg(2+) as a cofactor. Expressed in a number of tissues. Abundant in thymus.

It localises to the nucleus. It catalyses the reaction DNA(n) + a 2'-deoxyribonucleoside 5'-triphosphate = DNA(n+1) + diphosphate. In terms of biological role, gap-filling polymerase involved in repair of DNA double-strand breaks by non-homologous end joining (NHEJ). Participates in immunoglobulin (Ig) light chain gene rearrangement in V(D)J recombination. The chain is DNA-directed DNA/RNA polymerase mu (POLM) from Homo sapiens (Human).